We begin with the raw amino-acid sequence, 144 residues long: Transcription antitermination protein NusB (144 aa).

Belongs to the NusB family.

Involved in transcription antitermination. Required for transcription of ribosomal RNA (rRNA) genes. Binds specifically to the boxA antiterminator sequence of the ribosomal RNA (rrn) operons. In Streptomyces avermitilis (strain ATCC 31267 / DSM 46492 / JCM 5070 / NBRC 14893 / NCIMB 12804 / NRRL 8165 / MA-4680), this protein is Transcription antitermination protein NusB.